Here is a 737-residue protein sequence, read N- to C-terminus: Cilium assembly protein DZIP1L (737 aa).

The tract at residues 1–293 is interaction with Rab8; it reads MGFKGKYPQM…LKQSNEQFIQ (293 aa). A coiled-coil region spans residues 98 to 132; the sequence is VTDLKEAHTTAQEEIATLRKSLSESNNEVVQLHKR. Residues 144–167 form a C2H2-type zinc finger; that stretch reads YPCHLCTKNFISNEALNVHIGRKH. Disordered regions lie at residues 167–187, 214–267, 415–548, 624–682, and 698–737; these read HRVA…DRDK, ERNI…KEQL, SEFL…RKDA, KSPL…VSRD, and IRGA…DNLK. 2 stretches are compositionally biased toward basic and acidic residues: residues 244–266 and 415–438; these read EPKE…RKEQ and SEFL…KGSE. Residues 457–469 are compositionally biased toward polar residues; the sequence is SAGSSDSNPTYTK. Residues 492–510 show a composition bias toward acidic residues; sequence SQEETENEEERSLTEEEGT. A compositionally biased stretch (polar residues) spans 665–677; the sequence is SSEQQTRSPSPQR. Residues 724-737 are compositionally biased toward basic and acidic residues; it reads EDGKSFNDSDDNLK.

It belongs to the DZIP C2H2-type zinc-finger protein family. Component of a ciliary transition zone (TZ)-localized complex composed of DZIP1, Fam92 and Cby. Interacts directly with Cby. Interacts with Cep290 (via N-terminus). Interacts (via N-terminus) with Rab8. In neurons of the second and third antennal segments, expressed at the tip of the dendrites.

It is found in the cytoplasm. It localises to the cytoskeleton. The protein resides in the microtubule organizing center. The protein localises to the centrosome. Its subcellular location is the centriole. It is found in the cilium basal body. In terms of biological role, component of the DZIP1-Fam92-Cby complex which promotes ciliogenesis in sensory neurons and spermatocytes by acting downstream of Cep290 to initiate early ciliary membrane formation and thus transition zone (TZ) assembly. During spermatogenesis, also regulates distal elongation of the basal-body and their docking (anchoring) to the plasma membrane and as a consequence, regulates the initiation and proper elongation of axonemal microtubules. Within the complex, required to recruit or stabilize Rab8, Fam92 and Cby at the distal basal body of cilia to promote early ciliary membrane formation and initiate TZ assembly. Also acts with Fam92 to restrict Cep290 localization to the proximal part of the TZ. May also be involved in recruitment or stabilization of Mks1 at the TZ. The polypeptide is Cilium assembly protein DZIP1L (Drosophila melanogaster (Fruit fly)).